The sequence spans 410 residues: Peptidase T (410 aa).

His78 is a Zn(2+) binding site. Asp80 is an active-site residue. Asp140 is a binding site for Zn(2+). The Proton acceptor role is filled by Glu174. The Zn(2+) site is built by Glu175, Asp197, and His379.

This sequence belongs to the peptidase M20B family. It depends on Zn(2+) as a cofactor.

Its subcellular location is the cytoplasm. It catalyses the reaction Release of the N-terminal residue from a tripeptide.. Functionally, cleaves the N-terminal amino acid of tripeptides. This is Peptidase T from Vibrio atlanticus (strain LGP32) (Vibrio splendidus (strain Mel32)).